A 542-amino-acid polypeptide reads, in one-letter code: Chaperonin GroEL (542 aa).

Residues 29 to 32, lysine 50, 86 to 90, glycine 415, and aspartate 495 contribute to the ATP site; these read TLGP and DGTTT.

Belongs to the chaperonin (HSP60) family. As to quaternary structure, forms a cylinder of 14 subunits composed of two heptameric rings stacked back-to-back. Interacts with the co-chaperonin GroES.

The protein localises to the cytoplasm. It catalyses the reaction ATP + H2O + a folded polypeptide = ADP + phosphate + an unfolded polypeptide.. In terms of biological role, together with its co-chaperonin GroES, plays an essential role in assisting protein folding. The GroEL-GroES system forms a nano-cage that allows encapsulation of the non-native substrate proteins and provides a physical environment optimized to promote and accelerate protein folding. This chain is Chaperonin GroEL, found in Flavobacterium psychrophilum (strain ATCC 49511 / DSM 21280 / CIP 103535 / JIP02/86).